Reading from the N-terminus, the 203-residue chain is Large ribosomal subunit protein bL25 (203 aa).

Belongs to the bacterial ribosomal protein bL25 family. CTC subfamily. In terms of assembly, part of the 50S ribosomal subunit; part of the 5S rRNA/L5/L18/L25 subcomplex. Contacts the 5S rRNA. Binds to the 5S rRNA independently of L5 and L18.

Functionally, this is one of the proteins that binds to the 5S RNA in the ribosome where it forms part of the central protuberance. This chain is Large ribosomal subunit protein bL25, found in Rickettsia rickettsii (strain Iowa).